The sequence spans 269 residues: tRNA pseudouridine synthase A (269 aa).

Aspartate 51 (nucleophile) is an active-site residue. Residue tyrosine 109 coordinates substrate.

The protein belongs to the tRNA pseudouridine synthase TruA family. Homodimer.

The catalysed reaction is uridine(38/39/40) in tRNA = pseudouridine(38/39/40) in tRNA. Functionally, formation of pseudouridine at positions 38, 39 and 40 in the anticodon stem and loop of transfer RNAs. This chain is tRNA pseudouridine synthase A, found in Haemophilus influenzae (strain PittGG).